The primary structure comprises 202 residues: Snake venom metalloproteinase atroxlysin-1 (202 aa).

Residues arginine 6–arginine 202 enclose the Peptidase M12B domain. Residues aspartate 9 and aspartate 93 each coordinate Ca(2+). 3 cysteine pairs are disulfide-bonded: cysteine 117–cysteine 197, cysteine 157–cysteine 181, and cysteine 159–cysteine 164. Histidine 142 is a Zn(2+) binding site. Glutamate 143 is a catalytic residue. Residues histidine 146 and histidine 152 each contribute to the Zn(2+) site. Residues cysteine 197 and asparagine 200 each contribute to the Ca(2+) site.

The protein belongs to the venom metalloproteinase (M12B) family. P-I subfamily. As to quaternary structure, monomer. The cofactor is Zn(2+). In terms of tissue distribution, expressed by the venom gland.

It localises to the secreted. With respect to regulation, inhibited by EDTA, DTT and high concentrations of zinc ions (&gt;2 mM). Weakly inhibited by TLCK. Not inhibited by PMSF. Activated by calcium ions. Snake venom zinc metalloproteinase that acts on fibrinogen, fibrin, fibronectin (FN1), type I collagen, type IV collagen, integrin alpha-7/beta-1 (ITGA7/ITGB1) and integrin alpha-1/beta-1 (ITGA1/ITGB1). Binds to fibronectin (FN1), fibrinogen and, weakly, to type I collagen and laminin. Cleaves Xaa-Leu bonds. Inhibits ADP- and collagen-induced platelet aggregation both in the presence (IC(50)=1.4 uM for collagen) and in the absence (IC(50)=2.2 uM for collagen) of cofactors. Has hemorrhagic activity. The sequence is that of Snake venom metalloproteinase atroxlysin-1 from Bothrops atrox (Barba amarilla).